The sequence spans 194 residues: MSLISRLRAVVAGDDYLDSDYDDLDYDTDDHMDADHRSDHASGGALATPSDSSPFDLGGGFSGSNVIGMPGVGSTSAEVNLMEPRSFDEMPRAIQALRERKTVILNLTMMEPDQAQRAVDFVAGGTFAIDGHQERVGESIFLFAPSCVTVSNTSYDEASAPSMVSQDHDSVPSSSQQTGAAPVPAWEATSAGGL.

2 disordered regions span residues 35-54 (DHRSDHASGGALATPSDSSP) and 159-194 (SAPSMVSQDHDSVPSSSQQTGAAPVPAWEATSAGGL).

It belongs to the SepF family. In terms of assembly, homodimer. Interacts with FtsZ.

It localises to the cytoplasm. Its function is as follows. Cell division protein that is part of the divisome complex and is recruited early to the Z-ring. Probably stimulates Z-ring formation, perhaps through the cross-linking of FtsZ protofilaments. Its function overlaps with FtsA. This Prochlorococcus marinus (strain MIT 9313) protein is Cell division protein SepF.